The primary structure comprises 1297 residues: Phosphoribosylformylglycinamidine synthase (1297 aa).

ATP is bound by residues 307–318 and A678; that span reads GASTGSGGEIRD. The Mg(2+) site is built by E718, N722, and D886. In terms of domain architecture, Glutamine amidotransferase type-1 spans 1044–1297; that stretch reads MAILREQGVN…MFQNARKNLA (254 aa). C1137 acts as the Nucleophile in catalysis. Active-site residues include H1262 and E1264.

It in the N-terminal section; belongs to the FGAMS family. As to quaternary structure, monomer.

The protein localises to the cytoplasm. The enzyme catalyses N(2)-formyl-N(1)-(5-phospho-beta-D-ribosyl)glycinamide + L-glutamine + ATP + H2O = 2-formamido-N(1)-(5-O-phospho-beta-D-ribosyl)acetamidine + L-glutamate + ADP + phosphate + H(+). It functions in the pathway purine metabolism; IMP biosynthesis via de novo pathway; 5-amino-1-(5-phospho-D-ribosyl)imidazole from N(2)-formyl-N(1)-(5-phospho-D-ribosyl)glycinamide: step 1/2. Functionally, phosphoribosylformylglycinamidine synthase involved in the purines biosynthetic pathway. Catalyzes the ATP-dependent conversion of formylglycinamide ribonucleotide (FGAR) and glutamine to yield formylglycinamidine ribonucleotide (FGAM) and glutamate. This is Phosphoribosylformylglycinamidine synthase from Vibrio vulnificus (strain YJ016).